A 418-amino-acid chain; its full sequence is Transcription termination factor Rho (418 aa).

In terms of domain architecture, Rho RNA-BD spans 48-123; sequence DIYGDGVLEI…LKVNDINFDR (76 aa). Residues 169 to 174, 181 to 186, and Arg-212 each bind ATP; these read GKGQRG and KAGKTM.

Belongs to the Rho family. Homohexamer. The homohexamer assembles into an open ring structure.

Facilitates transcription termination by a mechanism that involves Rho binding to the nascent RNA, activation of Rho's RNA-dependent ATPase activity, and release of the mRNA from the DNA template. This Allochromatium vinosum (strain ATCC 17899 / DSM 180 / NBRC 103801 / NCIMB 10441 / D) (Chromatium vinosum) protein is Transcription termination factor Rho.